Here is a 172-residue protein sequence, read N- to C-terminus: Protein-export protein SecB (172 aa).

The protein belongs to the SecB family. As to quaternary structure, homotetramer, a dimer of dimers. One homotetramer interacts with 1 SecA dimer.

It localises to the cytoplasm. One of the proteins required for the normal export of preproteins out of the cell cytoplasm. It is a molecular chaperone that binds to a subset of precursor proteins, maintaining them in a translocation-competent state. It also specifically binds to its receptor SecA. In Dinoroseobacter shibae (strain DSM 16493 / NCIMB 14021 / DFL 12), this protein is Protein-export protein SecB.